A 91-amino-acid polypeptide reads, in one-letter code: Small ribosomal subunit protein uS19 (91 aa).

This sequence belongs to the universal ribosomal protein uS19 family.

Its function is as follows. Protein S19 forms a complex with S13 that binds strongly to the 16S ribosomal RNA. The sequence is that of Small ribosomal subunit protein uS19 from Sulfurimonas denitrificans (strain ATCC 33889 / DSM 1251) (Thiomicrospira denitrificans (strain ATCC 33889 / DSM 1251)).